The sequence spans 147 residues: Peptide deformylase 1 (147 aa).

2 residues coordinate Fe cation: Cys-90 and His-132. Glu-133 is an active-site residue. His-136 contacts Fe cation.

Belongs to the polypeptide deformylase family. The cofactor is Fe(2+).

It carries out the reaction N-terminal N-formyl-L-methionyl-[peptide] + H2O = N-terminal L-methionyl-[peptide] + formate. Removes the formyl group from the N-terminal Met of newly synthesized proteins. Requires at least a dipeptide for an efficient rate of reaction. N-terminal L-methionine is a prerequisite for activity but the enzyme has broad specificity at other positions. The sequence is that of Peptide deformylase 1 from Clostridium perfringens (strain 13 / Type A).